The chain runs to 424 residues: Histidine--tRNA ligase (424 aa).

It belongs to the class-II aminoacyl-tRNA synthetase family. Homodimer.

It is found in the cytoplasm. The catalysed reaction is tRNA(His) + L-histidine + ATP = L-histidyl-tRNA(His) + AMP + diphosphate + H(+). The chain is Histidine--tRNA ligase from Shigella flexneri.